Reading from the N-terminus, the 785-residue chain is E3 UFM1-protein ligase 1 homolog (785 aa).

Residues 396 to 416 (MKHQDVIPDKESAENKADKRD) are compositionally biased toward basic and acidic residues. The interval 396-473 (MKHQDVIPDK…KSAGGKKGAK (78 aa)) is disordered. The span at 439 to 449 (KSTKKHARGHR) shows a compositional bias: basic residues.

The protein belongs to the UFL1 family.

Its function is as follows. E3 UFM1-protein ligase that mediates ufmylation of target proteins. This is E3 UFM1-protein ligase 1 homolog from Culex quinquefasciatus (Southern house mosquito).